Here is a 425-residue protein sequence, read N- to C-terminus: 1,4-beta-D-glucan glucohydrolase (425 aa).

The active-site Proton donor is Glu-164. The active-site Nucleophile is the Glu-349.

Belongs to the glycosyl hydrolase 1 family. As to quaternary structure, monomer.

It carries out the reaction Hydrolysis of (1-&gt;4)-linkages in (1-&gt;4)-beta-D-glucans, to remove successive glucose units.. The catalysed reaction is Hydrolysis of terminal, non-reducing beta-D-glucosyl residues with release of beta-D-glucose.. It functions in the pathway glycan metabolism; cellulose degradation. Its pathway is glycan metabolism; beta-D-glucan degradation. In terms of biological role, broad substrate specificity glycosidase. Releases glucose from soluble glucooligomers, with a preference for longer oligomers; acts more readily on cellotetraose than on cellobiose. Displays similar activities towards the disaccharides lactose and cellobiose. Is also able to hydrolyze various aryl-beta-glycosides in vitro. This chain is 1,4-beta-D-glucan glucohydrolase (bglA), found in Thermotoga neapolitana.